Consider the following 219-residue polypeptide: Thiamine-phosphate synthase (219 aa).

Residues 44–48 (QFREK) and asparagine 79 each bind 4-amino-2-methyl-5-(diphosphooxymethyl)pyrimidine. Aspartate 80 and aspartate 99 together coordinate Mg(2+). Serine 117 lines the 4-amino-2-methyl-5-(diphosphooxymethyl)pyrimidine pocket. 143–145 (TST) contacts 2-[(2R,5Z)-2-carboxy-4-methylthiazol-5(2H)-ylidene]ethyl phosphate. Lysine 146 is a binding site for 4-amino-2-methyl-5-(diphosphooxymethyl)pyrimidine. 2-[(2R,5Z)-2-carboxy-4-methylthiazol-5(2H)-ylidene]ethyl phosphate-binding positions include glycine 175 and 195 to 196 (IS).

The protein belongs to the thiamine-phosphate synthase family. Requires Mg(2+) as cofactor.

It carries out the reaction 2-[(2R,5Z)-2-carboxy-4-methylthiazol-5(2H)-ylidene]ethyl phosphate + 4-amino-2-methyl-5-(diphosphooxymethyl)pyrimidine + 2 H(+) = thiamine phosphate + CO2 + diphosphate. It catalyses the reaction 2-(2-carboxy-4-methylthiazol-5-yl)ethyl phosphate + 4-amino-2-methyl-5-(diphosphooxymethyl)pyrimidine + 2 H(+) = thiamine phosphate + CO2 + diphosphate. The enzyme catalyses 4-methyl-5-(2-phosphooxyethyl)-thiazole + 4-amino-2-methyl-5-(diphosphooxymethyl)pyrimidine + H(+) = thiamine phosphate + diphosphate. The protein operates within cofactor biosynthesis; thiamine diphosphate biosynthesis; thiamine phosphate from 4-amino-2-methyl-5-diphosphomethylpyrimidine and 4-methyl-5-(2-phosphoethyl)-thiazole: step 1/1. Its function is as follows. Condenses 4-methyl-5-(beta-hydroxyethyl)thiazole monophosphate (THZ-P) and 2-methyl-4-amino-5-hydroxymethyl pyrimidine pyrophosphate (HMP-PP) to form thiamine monophosphate (TMP). In Bacillus cereus (strain ATCC 14579 / DSM 31 / CCUG 7414 / JCM 2152 / NBRC 15305 / NCIMB 9373 / NCTC 2599 / NRRL B-3711), this protein is Thiamine-phosphate synthase.